The following is a 532-amino-acid chain: Tyrosine-protein kinase Src-1 (532 aa).

A disordered region spans residues 1 to 52 (MGATKSKPREGGPRSRSLDIVEGSHQPFTSLSASQTPNKSLDSHRPPAQPFG). The N-myristoyl glycine moiety is linked to residue Gly-2. A compositionally biased stretch (basic and acidic residues) spans 7-19 (KPREGGPRSRSLD). The segment covering 26–40 (QPFTSLSASQTPNKS) has biased composition (polar residues). Residues 80-141 (GGVTTFVALY…PSNYVAPSDS (62 aa)) form the SH3 domain. The SH2 domain occupies 147–244 (WYLGKITRRE…GLCHRLTTVC (98 aa)). Residues 266–519 (LRLELKLGQG…YLQAFLEDYF (254 aa)) enclose the Protein kinase domain. Residues 272 to 280 (LGQGCFGEV) and Lys-294 contribute to the ATP site. The active-site Proton acceptor is Asp-385. Tyr-415 is modified (phosphotyrosine; by autocatalysis).

The protein belongs to the protein kinase superfamily. Tyr protein kinase family. SRC subfamily.

It is found in the cell membrane. The enzyme catalyses L-tyrosyl-[protein] + ATP = O-phospho-L-tyrosyl-[protein] + ADP + H(+). The polypeptide is Tyrosine-protein kinase Src-1 (src-a) (Xenopus laevis (African clawed frog)).